Consider the following 396-residue polypeptide: G-protein coupled receptor 84 (396 aa).

Over 1–26 (MWNSSDANFSCYHESVLGYRYVAVSW) the chain is Extracellular. Asparagine 3 and asparagine 8 each carry an N-linked (GlcNAc...) asparagine glycan. Residues 27–47 (GVVVAVTGTVGNVLTLLALAI) traverse the membrane as a helical segment. Residues 48–57 (QPKLRTRFNL) are Cytoplasmic-facing. The helical transmembrane segment at 58-78 (LIANLTLADLLYCTLLQPFSV) threads the bilayer. Topologically, residues 79–94 (DTYLHLHWRTGATFCR) are extracellular. The helical transmembrane segment at 95–115 (VFGLLLFASNSVSILTLCLIA) threads the bilayer. Over 116-144 (LGRYLLIAHPKLFPQVFSAKGIVLALVST) the chain is Cytoplasmic. Residues 145-165 (WVVGVASFAPLWPIYILVPVV) form a helical membrane-spanning segment. At 166–180 (CTCSFDRIRGRPYTT) the chain is on the extracellular side. The chain crosses the membrane as a helical span at residues 181–201 (ILMGIYFVLGLSSVGIFYCLI). Over 202-320 (HRQVKRAAQA…SSEFGKVTRM (119 aa)) the chain is Cytoplasmic. Phosphoserine is present on residues serine 221 and serine 224. Residues 244–311 (RLASGGPSEG…KGARRAPDSS (68 aa)) are disordered. Positions 247 to 260 (SGGPSEGISSEPVS) are enriched in low complexity. Phosphothreonine is present on residues threonine 263 and threonine 264. The helical transmembrane segment at 321 to 341 (CFAVFLCFALSYIPFLLLNIL) threads the bilayer. The Extracellular segment spans residues 342–352 (DARVQAPRVVH). A helical transmembrane segment spans residues 353-373 (MLAANLTWLNGCINPVLYAAM). The Cytoplasmic segment spans residues 374-396 (NRQFRQAYGSILKRGPRSFHRLH).

It belongs to the G-protein coupled receptor 1 family. Interacts with ARRB2 and ARR3. Phosphorylated by a subset of GPR84-activating ligands. Constitutively phosphorylated at Ser-221 and Ser-224 in the absence of 2-HTP. By contrast, Thr-263 and Thr-264 are phosphorylated only following prior cell treatment with 2-HTP. In terms of tissue distribution, expressed predominantly in hematopoietic tissues. High levels detected in the bone marrow and lower levels in the peripheral leukocytes and lung. Also expressed in brain, heart, muscle, colon, thymus, spleen, kidney, liver, placenta and intestine. Within the leukocyte population expression is higher in neutrophils and eosinophils relative to T- or B-lymphocytes.

The protein localises to the cell membrane. Functionally, g protein-coupled receptor that responds endogenously to dietary fatty acids or nutrient, specifically medium-chain free fatty acid (FFA) with carbon chain lengths of C9 to C14. Capric acid (C10:0), undecanoic acid (C11:0) and lauric acid (C12:0) are the most potent agonists. In immune cells, functions as a pro-inflammatory receptor via 6-OAU and promotes the expression of pro-inflammatory mediators such as TNFalpha, IL-6 and IL-12B as well as stimulating chemotactic responses through activation of signaling mediators AKT, ERK and NF-kappa-B. In addition, triggers increased bacterial adhesion and phagocytosis in macrophages and regulates pro-inflammatory function via enhancing NLRP3 inflammasome activation. Also plays an important role in inflammation by modulating neutrophil functions. Mechanistically, promotes neutrophil chemotaxis, reactive oxygen species (ROS) production and degranulation via LYN-AKT/ERK pathway. To regulate ROS, communicates with the two formyl peptide receptors FPR2 and FPR1 to control the NADPH oxidase activity in neutrophils. In Homo sapiens (Human), this protein is G-protein coupled receptor 84 (GPR84).